A 500-amino-acid chain; its full sequence is Neuronal acetylcholine receptor subunit beta-2 (500 aa).

Residues 1 to 24 (MAGHSNSMALFSFSLLWLCSGVLG) form the signal peptide. The Extracellular segment spans residues 25-237 (TDTEERLVEH…IIRRKPLFYT (213 aa)). 2 N-linked (GlcNAc...) asparagine glycosylation sites follow: Asn50 and Asn167. Residues Cys154 and Cys168 are joined by a disulfide bond. The helical transmembrane segment at 238-258 (INLIIPCVLITSLAILVFYLP) threads the bilayer. The Cytoplasmic segment spans residues 259-266 (SDCGEKMT). The chain crosses the membrane as a helical span at residues 267-287 (LCISVLLALTVFLLLISKIVP). At 288–299 (PTSLDVPLVGKY) the chain is on the extracellular side. The chain crosses the membrane as a helical span at residues 300 to 320 (LMFTMVLVTFSIVTSVCVLNV). Over 321–458 (HHRSPTTHTM…WKYVAMVIDR (138 aa)) the chain is Cytoplasmic. A helical transmembrane segment spans residues 459 to 479 (LFLWIFVFVCVFGTVGMFLQP).

Belongs to the ligand-gated ion channel (TC 1.A.9) family. Acetylcholine receptor (TC 1.A.9.1) subfamily. Beta-2/CHRNB2 sub-subfamily. Neuronal AChR is a heteropentamer composed of two different types of subunits: alpha and beta. CHRNB2/Beta-2 subunit can be combined to CHRNA2/alpha-2, CHRNA3/alpha-3 or CHRNA4/alpha-4, CHRNA5/alpha-5, CHRNA6/alpha-6 and CHRNB3/beta-3 to give rise to functional receptors. CHRNA2:CHRNB2 and CHRNA4:CHRNB2 nAChR complexes exist in two subtypes: LS (low agonist sensitivity) with a (CHRNA2/4)3:(CHRNB2)2 and HS (high agonist sensitivity) with a (CHRNA2/4)2:(CHRNB2)3 stoichiometry; the subtypes differ in their subunit binding interfaces which are involved in ligand binding. Cells produce predominantly an (CHRNA4)3:(CHRNB2)2 nAChR. The stoichiometric form (CHRNA4)2:(CHRNB2)3 expression is selectively up-regulated by nicotine and has lower single channel conductance and calcium permeability. Also part of the stoichiometric forms: (CHRNA4:CHRNB2)2:CHRNB3 or (CHRNA6:CHRNB2)2:CHRNB3. Can form heteropentamers with CHRNA7, mainly found in basal forebrain cholinergic neurons. Interacts with RIC3; which is required for proper folding and assembly. Interacts with LYPD6. As to expression, expressed in most regions of the CNS.

The protein localises to the synaptic cell membrane. The protein resides in the cell membrane. The catalysed reaction is Ca(2+)(in) = Ca(2+)(out). It catalyses the reaction K(+)(in) = K(+)(out). The enzyme catalyses Na(+)(in) = Na(+)(out). With respect to regulation, activated by a myriad of ligands such as acetylcholine, cytisine, nicotine, choline and epibatidine. Channel potentiation by calcium is stoichiometry-selective, CHRNA4:CHRNB2 nACh receptor is achieved by calcium association with topographically distinct sites framed by anionic residues within the CHRNA4 subunit and between the CHRNA4 and CHRNB2 subunits. Oligomeric amyloid-beta protein 42 activates specifially CHRNA7:CHRNB2 nAchRs. nAChR activity is inhibited by the antagonist alpha-conotoxins BuIA, PnIA, PnIC, GID and MII, small disulfide-constrained peptides from cone snails. Component of neuronal acetylcholine receptors (nAChRs) that function as pentameric, ligand-gated cation channels with high calcium permeability among other activities. nAChRs are excitatory neurotrasnmitter receptors formed by a collection of nAChR subunits known to mediate synaptic transmission in the nervous system and the neuromuscular junction. Each nAchR subunit confers differential attributes to channel properties, including activation, deactivation and desensitization kinetics, pH sensitivity, cation permeability, and binding to allosteric modulators. CHRNB2 forms heteropentameric neuronal acetylcholine receptors with CHRNA2, CHRNA3, CHRNA4 and CHRNA6, as well as CHRNA5 and CHRNB3 as accesory subunits. Found in two major stoichiometric forms,(CHRNA4)3:(CHRNB2)2 and (CHRNA4)2:(CHRNB2)3, the two stoichiometric forms differ in their unitary conductance, calcium permeability, ACh sensitivity and potentiation by divalent cation. Heteropentameric channels with CHRNA6 and CHRNA4 exhibit high sensitivity to ACh and nicotine and are predominantly expressed in only a few brain areas, including dopaminergic neurons, norepirephrine neurons and cells of the visual system. nAChrs containing CHRNA6 subunits mediate endogenous cholinergic modulation of dopamine and gamma-aminobutyric acid (GABA) release in response to nicotine at nerve terminals. Also forms functional nAChRs with other subunits such as CHRNA7:CHRNB2, mainly expressed in basal forebrain cholinergic neurons. The protein is Neuronal acetylcholine receptor subunit beta-2 (Chrnb2) of Rattus norvegicus (Rat).